We begin with the raw amino-acid sequence, 728 residues long: Procollagen-lysine,2-oxoglutarate 5-dioxygenase 1 (728 aa).

A signal peptide spans 1-18 (MRSLLLLASLAWLLLAQA). N-linked (GlcNAc...) asparagine glycans are attached at residues Asn-177, Asn-198, and Asn-539. In terms of domain architecture, Fe2OG dioxygenase spans 637–728 (QFDLAFVVRY…RYIAVSFVDP (92 aa)). Residues His-657 and Asp-659 each coordinate Fe cation. Asn-687 carries N-linked (GlcNAc...) asparagine glycosylation. Fe cation is bound at residue His-709. Residue Arg-719 is part of the active site.

In terms of assembly, homodimer. Identified in a complex with P3H3 and P3H4. It depends on Fe(2+) as a cofactor. The cofactor is L-ascorbate.

It localises to the rough endoplasmic reticulum membrane. The enzyme catalyses L-lysyl-[collagen] + 2-oxoglutarate + O2 = (5R)-5-hydroxy-L-lysyl-[collagen] + succinate + CO2. In terms of biological role, part of a complex composed of PLOD1, P3H3 and P3H4 that catalyzes hydroxylation of lysine residues in collagen alpha chains and is required for normal assembly and cross-linkling of collagen fibrils. Forms hydroxylysine residues in -Xaa-Lys-Gly- sequences in collagens. These hydroxylysines serve as sites of attachment for carbohydrate units and are essential for the stability of the intermolecular collagen cross-links. This Rattus norvegicus (Rat) protein is Procollagen-lysine,2-oxoglutarate 5-dioxygenase 1 (Plod1).